We begin with the raw amino-acid sequence, 70 residues long: Brevinin-1PLb (70 aa).

Residues 1 to 22 (MFTTKKSMLLLFFLGTINLSLC) form the signal peptide. The propeptide occupies 23-44 (EEERNAEEERRDEPDEMNVEVE). A disulfide bond links C64 and C70.

As to expression, expressed by the skin glands.

It is found in the secreted. In terms of biological role, antimicrobial activity against the Gram-negative bacterium E.coli, the Gram-positive bacterium S.aureus and the yeast C.albicans. In Lithobates palustris (Pickerel frog), this protein is Brevinin-1PLb.